A 406-amino-acid chain; its full sequence is Secretion apparatus protein BsaZ (406 aa).

A run of 4 helical transmembrane segments spans residues 28–48 (IVAL…VDLT), 80–100 (IAAP…LVQS), 137–157 (ALLY…LYHA), and 175–195 (IVLT…VLIL). The disordered stretch occupies residues 341–406 (AANRGGPPPE…APARTGDQNA (66 aa)). Residues 370–399 (DACADNAFPDDAPPGAAAPNAGSPDGGAPA) show a composition bias toward low complexity.

The protein belongs to the type III secretion exporter family.

The protein resides in the cell membrane. Its function is as follows. Part of the bsa type III secretion system, is involved in the intracellular replication of invading bacteria inside the host cell. Probably necessary for the lysis of the vacuole membrane and escape into the host cell cytoplasm. The polypeptide is Secretion apparatus protein BsaZ (bsaZ) (Burkholderia pseudomallei (strain 668)).